A 189-amino-acid polypeptide reads, in one-letter code: Ribonuclease M5 (189 aa).

The Toprim domain maps to 8–91; the sequence is KEIIVVEGKD…AFLPKEEALA (84 aa). Mg(2+)-binding residues include glutamate 14, aspartate 60, and aspartate 62.

It belongs to the ribonuclease M5 family. Requires Mg(2+) as cofactor.

The protein localises to the cytoplasm. It catalyses the reaction Endonucleolytic cleavage of RNA, removing 21 and 42 nucleotides, respectively, from the 5'- and 3'-termini of a 5S-rRNA precursor.. Functionally, required for correct processing of both the 5' and 3' ends of 5S rRNA precursor. Cleaves both sides of a double-stranded region yielding mature 5S rRNA in one step. The sequence is that of Ribonuclease M5 from Bacillus cereus (strain ATCC 14579 / DSM 31 / CCUG 7414 / JCM 2152 / NBRC 15305 / NCIMB 9373 / NCTC 2599 / NRRL B-3711).